The following is a 593-amino-acid chain: Efflux pump FUB11 (593 aa).

A disordered region spans residues 1-45 (MAIDPQPSSPSLSSETIANDTIGNDNNVNEPSVEPKTQEHQHTVP). The span at 9 to 30 (SPSLSSETIANDTIGNDNNVNE) shows a compositional bias: polar residues. Asparagine 19 carries N-linked (GlcNAc...) asparagine glycosylation. The next 12 helical transmembrane spans lie at 98–118 (WAFV…SSAY), 135–155 (VATL…LVWA), 167–187 (FFFT…AGSI), 195–215 (FLTG…IADM), 227–247 (MFSG…GFLG), 254–274 (WLHG…TVFI), 337–357 (IYIS…PIVF), 367–387 (IGGL…ISFA), 410–430 (LPPA…FAWT), 438–458 (IVPI…FMAL), 468–488 (IFAA…GAAF), and 503–523 (WASS…FLFY). A disordered region spans residues 570–593 (THNSHASAAHSHGHRRSLSYTRSA).

This sequence belongs to the major facilitator superfamily. DHA1 family. Polyamines/proton antiporter (TC 2.A.1.2.16) subfamily.

It localises to the cell membrane. Functionally, efflux pump involved in export of fusaric acid, a mycotoxin with low to moderate toxicity to animals and humans, but with high phytotoxic properties. Constitutes a self-protecting mechanism of the fungus against critical levels of FSA within the cell. This is Efflux pump FUB11 from Gibberella moniliformis (strain M3125 / FGSC 7600) (Maize ear and stalk rot fungus).